The primary structure comprises 341 residues: Anthranilate phosphoribosyltransferase (341 aa).

Residues glycine 79, 82-83, threonine 87, 89-92, 107-115, and serine 119 contribute to the 5-phospho-alpha-D-ribose 1-diphosphate site; these read GD, NIST, and KHGGRSVSS. Position 79 (glycine 79) interacts with anthranilate. Mg(2+) is bound at residue serine 91. Residue arginine 165 coordinates anthranilate. Mg(2+) contacts are provided by aspartate 224 and glutamate 225.

It belongs to the anthranilate phosphoribosyltransferase family. Homodimer. Mg(2+) is required as a cofactor.

The catalysed reaction is N-(5-phospho-beta-D-ribosyl)anthranilate + diphosphate = 5-phospho-alpha-D-ribose 1-diphosphate + anthranilate. It functions in the pathway amino-acid biosynthesis; L-tryptophan biosynthesis; L-tryptophan from chorismate: step 2/5. In terms of biological role, catalyzes the transfer of the phosphoribosyl group of 5-phosphorylribose-1-pyrophosphate (PRPP) to anthranilate to yield N-(5'-phosphoribosyl)-anthranilate (PRA). This is Anthranilate phosphoribosyltransferase from Ruminiclostridium cellulolyticum (strain ATCC 35319 / DSM 5812 / JCM 6584 / H10) (Clostridium cellulolyticum).